The sequence spans 254 residues: 3-deoxy-manno-octulosonate cytidylyltransferase (254 aa).

It belongs to the KdsB family.

Its subcellular location is the cytoplasm. The catalysed reaction is 3-deoxy-alpha-D-manno-oct-2-ulosonate + CTP = CMP-3-deoxy-beta-D-manno-octulosonate + diphosphate. It functions in the pathway nucleotide-sugar biosynthesis; CMP-3-deoxy-D-manno-octulosonate biosynthesis; CMP-3-deoxy-D-manno-octulosonate from 3-deoxy-D-manno-octulosonate and CTP: step 1/1. Activates KDO (a required 8-carbon sugar) for incorporation into bacterial lipopolysaccharide in Gram-negative bacteria. This Lawsonia intracellularis (strain PHE/MN1-00) protein is 3-deoxy-manno-octulosonate cytidylyltransferase.